The sequence spans 425 residues: Putative integrase/recombinase y4rF (425 aa).

In terms of domain architecture, Core-binding (CB) spans 123–210 (DPDALLLASF…HIRTFLRFLC (88 aa)). The 186-residue stretch at 233 to 418 (HLPPRLAWGD…AASQLAEVAL (186 aa)) folds into the Tyr recombinase domain. Residues Arg-273, Lys-298, His-370, Arg-373, and His-396 contribute to the active site. Tyr-405 functions as the O-(3'-phospho-DNA)-tyrosine intermediate in the catalytic mechanism.

This sequence belongs to the 'phage' integrase family.

The chain is Putative integrase/recombinase y4rF from Sinorhizobium fredii (strain NBRC 101917 / NGR234).